Consider the following 45-residue polypeptide: Cytochrome b559 subunit beta (45 aa).

The helical transmembrane segment at 20–36 threads the bilayer; it reads WLALHTLGVPTVFFLGA. His24 provides a ligand contact to heme.

It belongs to the PsbE/PsbF family. As to quaternary structure, heterodimer of an alpha subunit and a beta subunit. PSII is composed of 1 copy each of membrane proteins PsbA, PsbB, PsbC, PsbD, PsbE, PsbF, PsbH, PsbI, PsbJ, PsbK, PsbL, PsbM, PsbT, PsbX, PsbY, PsbZ, Psb30/Ycf12, peripheral proteins PsbO, CyanoQ (PsbQ), PsbU, PsbV and a large number of cofactors. It forms dimeric complexes. Heme b is required as a cofactor.

It localises to the cellular thylakoid membrane. In terms of biological role, this b-type cytochrome is tightly associated with the reaction center of photosystem II (PSII). PSII is a light-driven water:plastoquinone oxidoreductase that uses light energy to abstract electrons from H(2)O, generating O(2) and a proton gradient subsequently used for ATP formation. It consists of a core antenna complex that captures photons, and an electron transfer chain that converts photonic excitation into a charge separation. This is Cytochrome b559 subunit beta from Parasynechococcus marenigrum (strain WH8102).